A 410-amino-acid polypeptide reads, in one-letter code: Arginine biosynthesis bifunctional protein ArgJ (410 aa).

T160, K186, T197, E283, N405, and T410 together coordinate substrate. T197 (nucleophile) is an active-site residue.

Belongs to the ArgJ family. Heterotetramer of two alpha and two beta chains.

The protein resides in the cytoplasm. The catalysed reaction is N(2)-acetyl-L-ornithine + L-glutamate = N-acetyl-L-glutamate + L-ornithine. It catalyses the reaction L-glutamate + acetyl-CoA = N-acetyl-L-glutamate + CoA + H(+). The protein operates within amino-acid biosynthesis; L-arginine biosynthesis; L-ornithine and N-acetyl-L-glutamate from L-glutamate and N(2)-acetyl-L-ornithine (cyclic): step 1/1. It participates in amino-acid biosynthesis; L-arginine biosynthesis; N(2)-acetyl-L-ornithine from L-glutamate: step 1/4. Functionally, catalyzes two activities which are involved in the cyclic version of arginine biosynthesis: the synthesis of N-acetylglutamate from glutamate and acetyl-CoA as the acetyl donor, and of ornithine by transacetylation between N(2)-acetylornithine and glutamate. This chain is Arginine biosynthesis bifunctional protein ArgJ, found in Geobacillus kaustophilus (strain HTA426).